Here is a 102-residue protein sequence, read N- to C-terminus: UPF0751 protein Dhaf_1351 (102 aa).

This sequence belongs to the UPF0751 family.

In Desulfitobacterium hafniense (strain DSM 10664 / DCB-2), this protein is UPF0751 protein Dhaf_1351.